The following is a 384-amino-acid chain: N-acetyldiaminopimelate deacetylase (384 aa).

D74 is an active-site residue. Residue E133 is the Proton acceptor of the active site.

Belongs to the peptidase M20A family. N-acetyldiaminopimelate deacetylase subfamily.

The enzyme catalyses N-acetyl-(2S,6S)-2,6-diaminopimelate + H2O = (2S,6S)-2,6-diaminopimelate + acetate. It participates in amino-acid biosynthesis; L-lysine biosynthesis via DAP pathway; LL-2,6-diaminopimelate from (S)-tetrahydrodipicolinate (acetylase route): step 3/3. Catalyzes the conversion of N-acetyl-diaminopimelate to diaminopimelate and acetate. In Pediococcus pentosaceus (strain ATCC 25745 / CCUG 21536 / LMG 10740 / 183-1w), this protein is N-acetyldiaminopimelate deacetylase.